A 141-amino-acid chain; its full sequence is Pyrophosphate-energized proton pump (141 aa).

Transmembrane regions (helical) follow at residues 11 to 31 (GLIA…TLTV), 46 to 66 (GTNL…IVVI), and 121 to 141 (LAGL…AGMI).

Belongs to the H(+)-translocating pyrophosphatase (TC 3.A.10) family. As to quaternary structure, homodimer. Mg(2+) serves as cofactor.

Its subcellular location is the cell inner membrane. The enzyme catalyses diphosphate + H2O + H(+)(in) = 2 phosphate + 2 H(+)(out). In terms of biological role, proton pump that utilizes the energy of pyrophosphate hydrolysis as the driving force for proton movement across the membrane. Generates a proton motive force. In Anaplasma marginale, this protein is Pyrophosphate-energized proton pump (hppA).